The sequence spans 402 residues: Alkane 1-monooxygenase (402 aa).

4 helical membrane-spanning segments follow: residues 20–40 (YFWI…WLAN), 42–62 (TGWG…LPLL), 89–109 (VLTY…AWWV), and 114–134 (MSWF…GLAL). Fe cation contacts are provided by His138 and His142. Residues 146 to 166 (AFDRWMAKIVLAVVGYGHFFI) form a helical membrane-spanning segment. Fe cation is bound by residues His168, His172, and His173. The helical transmembrane segment at 236–256 (VVLYTLLLAFFGPKMLVFLPI) threads the bilayer. Residues His312, His315, and His316 each coordinate Fe cation.

This sequence belongs to the fatty acid desaturase type 1 family. AlkB subfamily. Requires Fe(3+) as cofactor.

The protein localises to the cell inner membrane. The enzyme catalyses octane + 2 reduced [rubredoxin] + O2 + 2 H(+) = 2 oxidized [rubredoxin] + octan-1-ol + H2O. It functions in the pathway hydrocarbon metabolism; alkane degradation. Its function is as follows. Catalyzes the hydroxylation of n-alkanes in the presence of a NADH-rubredoxin reductase and rubredoxin. This is Alkane 1-monooxygenase (alkB) from Pseudomonas putida (Arthrobacter siderocapsulatus).